A 107-amino-acid polypeptide reads, in one-letter code: Insulin-like peptide 6 (107 aa).

The first 33 residues, 1–33 (MVLKVPTSKVLLVLATLFAVAAMISSWMPQVAA), serve as a signal peptide directing secretion. Cystine bridges form between Cys48/Cys91, Cys60/Cys105, and Cys90/Cys96. A propeptide spans 67–76 (LGDVFPNSFG) (connecting peptide).

Belongs to the insulin family. Heterodimer of a B chain and an A chain linked by two disulfide bonds. In terms of tissue distribution, expressed at a low level in the larval gut.

The protein localises to the secreted. In terms of biological role, possible ligand of InR/insulin-like receptor. In Drosophila melanogaster (Fruit fly), this protein is Insulin-like peptide 6.